Here is a 339-residue protein sequence, read N- to C-terminus: Phosphoribosylformylglycinamidine cyclo-ligase (339 aa).

Belongs to the AIR synthase family.

It is found in the cytoplasm. It catalyses the reaction 2-formamido-N(1)-(5-O-phospho-beta-D-ribosyl)acetamidine + ATP = 5-amino-1-(5-phospho-beta-D-ribosyl)imidazole + ADP + phosphate + H(+). It functions in the pathway purine metabolism; IMP biosynthesis via de novo pathway; 5-amino-1-(5-phospho-D-ribosyl)imidazole from N(2)-formyl-N(1)-(5-phospho-D-ribosyl)glycinamide: step 2/2. This Streptococcus thermophilus (strain ATCC BAA-491 / LMD-9) protein is Phosphoribosylformylglycinamidine cyclo-ligase.